We begin with the raw amino-acid sequence, 522 residues long: Leucine-rich repeat transmembrane neuronal protein 1 (522 aa).

The signal sequence occupies residues 1 to 34; sequence MDFLLLGLCLYWLLRRPSGVVLCLLGACFQMLPA. The 29-residue stretch at 35-63 folds into the LRRNT domain; sequence APSGCPQLCRCEGRLLYCEALNLTEAPHN. Over 35–427 the chain is Extracellular; that stretch reads APSGCPQLCR…HAENAVQIHK (393 aa). N-linked (GlcNAc...) asparagine glycans are attached at residues Asn-56 and Asn-63. LRR repeat units follow at residues 64–87, 89–111, 112–135, 137–159, 161–183, 184–207, 209–231, 233–255, 256–278, and 279–302; these read LSGL…QFTG, MQLT…AFQK, LRRV…TFRP, PNLR…LFHG, RKLT…IFQD, CRSL…SFAG, FKLT…HFPR, ISLH…LDWV, WNLE…VFET, and VPHL…ILNS. N-linked (GlcNAc...) asparagine glycosylation occurs at Asn-130. Residues 314-365 form the LRRCT domain; it reads NLWDCGRNVCALASWLNNFQGRYDGNLQCASPEYAQGEDVLDAVYAFHLCED. The N-linked (GlcNAc...) asparagine glycan is linked to Asn-380. The disordered stretch occupies residues 382-401; sequence SDLGPPASSATTLADGGEGQ. Residues 428–448 traverse the membrane as a helical segment; it reads VVTGTMALIFSFLIVVLVLYV. At 449–522 the chain is on the cytoplasmic side; sequence SWKCFPASLR…HQQPARECEV (74 aa).

Belongs to the LRRTM family. In terms of tissue distribution, predominantly expressed in forebrain regions including thalamus and cerebral cortex.

Its subcellular location is the cell membrane. The protein resides in the postsynaptic cell membrane. Functionally, exhibits strong synaptogenic activity, restricted to excitatory presynaptic differentiation, acting at both pre- and postsynaptic level. The chain is Leucine-rich repeat transmembrane neuronal protein 1 (LRRTM1) from Homo sapiens (Human).